Reading from the N-terminus, the 310-residue chain is Bacteriochlorophyll synthase 34 kDa chain (310 aa).

The span at M1–P13 shows a compositional bias: polar residues. A disordered region spans residues M1–K20. A run of 8 helical transmembrane segments spans residues V39–G59, L67–D87, H112–G132, Q134–I154, L166–L186, T187–V207, V248–L268, and V287–G307.

Its subcellular location is the cell membrane. Its pathway is porphyrin-containing compound metabolism; bacteriochlorophyll biosynthesis (light-independent). In terms of biological role, catalyzes the esterification of bacteriochlorophyllide a by geranylgeraniol-PPi. The protein is Bacteriochlorophyll synthase 34 kDa chain (bchG) of Chloroflexus aurantiacus (strain ATCC 29366 / DSM 635 / J-10-fl).